The following is a 1117-amino-acid chain: DNA polymerase (1117 aa).

Residues 591–621 (ESSPVASFEEDSEQTSDSSLGEVSSQGSSDG) form a disordered region. Over residues 606–618 (SDSSLGEVSSQGS) the composition is skewed to low complexity.

This sequence belongs to the DNA polymerase type-B family.

It is found in the host nucleus. The enzyme catalyses DNA(n) + a 2'-deoxyribonucleoside 5'-triphosphate = DNA(n+1) + diphosphate. The protein is DNA polymerase of Cavia porcellus (Guinea pig).